The following is a 46-amino-acid chain: Toxin Up-1 (46 aa).

It is found in the secreted. The protein localises to the nematocyst. The protein resides in the target cell membrane. Functionally, this toxin is a potent hemolysin devoid of enzymatic activity. Its hemolytic activity is inhibited by sphingomyelin but not by cholesterol. In erythrocyte membranes, it causes numerous cell membrane ruptures. It also exerces cytotoxicity to different cell lines. It exerces a positive inotropic effect. Also causes hemorrhage and necrosis by dilation of the blood vessels in the skin, and vascular leakage of fluids and rupture of alveolar walls of the lungs. Is a potent ichtyotoxin. May act as a pore-forming toxin. The sequence is that of Toxin Up-1 from Urticina piscivora (Fish-eating sea anemone).